A 185-amino-acid polypeptide reads, in one-letter code: Ribosome-recycling factor (185 aa).

The protein belongs to the RRF family.

The protein localises to the cytoplasm. Its function is as follows. Responsible for the release of ribosomes from messenger RNA at the termination of protein biosynthesis. May increase the efficiency of translation by recycling ribosomes from one round of translation to another. The sequence is that of Ribosome-recycling factor from Wolbachia pipientis subsp. Culex pipiens (strain wPip).